A 376-amino-acid chain; its full sequence is MARDYYEILGVARDADKEEIKQAYRRLARKYHPDVNKEPGAEERFKEINRAYEVLSEPETRARYDRFGPEGVSGAGVGFQDMSDMGGFADIFESIFSGFAGGGMGGPTQQRRRGGPARGDDLRLDLKLDFREAVFGGEKEIRISHLETCETCSGSGAKPGTRPRTCSTCSGSGQVRRVTRTPFGSFTQVSTCPTCNGTGMVIEDKCDACDGKGTNQVTKKLKITIPAGVDNGTRLRIQQEGDAGQRGGPPGDLYVYLFVNEDEEFQRDGINVISEIKVSYLQAILGCRLEVNTVDGPVELIIPAGTQPNTVMKLENRGVPRLGNPVSRGDHLLTVLIDIPTKVIPEERELLEKLAKIKGDRTGKGGLEGFLGNLFK.

A J domain is found at 4–68 (DYYEILGVAR…ETRARYDRFG (65 aa)). A disordered region spans residues 102-121 (GGMGGPTQQRRRGGPARGDD). The CR-type zinc finger occupies 136–218 (GGEKEIRISH…CDGKGTNQVT (83 aa)). Zn(2+) contacts are provided by Cys149, Cys152, Cys166, Cys169, Cys192, Cys195, Cys206, and Cys209. CXXCXGXG motif repeat units lie at residues 149 to 156 (CETCSGSG), 166 to 173 (CSTCSGSG), 192 to 199 (CPTCNGTG), and 206 to 213 (CDACDGKG).

It belongs to the DnaJ family. As to quaternary structure, homodimer. The cofactor is Zn(2+).

The protein resides in the cytoplasm. Its function is as follows. Participates actively in the response to hyperosmotic and heat shock by preventing the aggregation of stress-denatured proteins and by disaggregating proteins, also in an autonomous, DnaK-independent fashion. Unfolded proteins bind initially to DnaJ; upon interaction with the DnaJ-bound protein, DnaK hydrolyzes its bound ATP, resulting in the formation of a stable complex. GrpE releases ADP from DnaK; ATP binding to DnaK triggers the release of the substrate protein, thus completing the reaction cycle. Several rounds of ATP-dependent interactions between DnaJ, DnaK and GrpE are required for fully efficient folding. Also involved, together with DnaK and GrpE, in the DNA replication of plasmids through activation of initiation proteins. The polypeptide is Chaperone protein DnaJ (Trichormus variabilis (strain ATCC 29413 / PCC 7937) (Anabaena variabilis)).